The chain runs to 573 residues: Dihydroxy-acid dehydratase (573 aa).

The span at 1 to 14 shows a compositional bias: basic and acidic residues; it reads MTEKSPKPHKRSDA. The disordered stretch occupies residues 1–21; sequence MTEKSPKPHKRSDAITEGPNR. A [2Fe-2S] cluster-binding site is contributed by Cys-55. Residue Asp-87 participates in Mg(2+) binding. [2Fe-2S] cluster is bound at residue Cys-128. Positions 129 and 130 each coordinate Mg(2+). Lys-130 is subject to N6-carboxylysine. A [2Fe-2S] cluster-binding site is contributed by Cys-200. Glu-450 is a binding site for Mg(2+). The active-site Proton acceptor is the Ser-476.

The protein belongs to the IlvD/Edd family. As to quaternary structure, homodimer. [2Fe-2S] cluster is required as a cofactor. Requires Mg(2+) as cofactor.

The enzyme catalyses (2R)-2,3-dihydroxy-3-methylbutanoate = 3-methyl-2-oxobutanoate + H2O. It catalyses the reaction (2R,3R)-2,3-dihydroxy-3-methylpentanoate = (S)-3-methyl-2-oxopentanoate + H2O. It participates in amino-acid biosynthesis; L-isoleucine biosynthesis; L-isoleucine from 2-oxobutanoate: step 3/4. It functions in the pathway amino-acid biosynthesis; L-valine biosynthesis; L-valine from pyruvate: step 3/4. In terms of biological role, functions in the biosynthesis of branched-chain amino acids. Catalyzes the dehydration of (2R,3R)-2,3-dihydroxy-3-methylpentanoate (2,3-dihydroxy-3-methylvalerate) into 2-oxo-3-methylpentanoate (2-oxo-3-methylvalerate) and of (2R)-2,3-dihydroxy-3-methylbutanoate (2,3-dihydroxyisovalerate) into 2-oxo-3-methylbutanoate (2-oxoisovalerate), the penultimate precursor to L-isoleucine and L-valine, respectively. In Koribacter versatilis (strain Ellin345), this protein is Dihydroxy-acid dehydratase.